Reading from the N-terminus, the 316-residue chain is Formimidoylglutamase (316 aa).

The Mn(2+) site is built by H127, D156, H158, D160, D247, and D249.

Belongs to the arginase family. It depends on Mn(2+) as a cofactor.

The catalysed reaction is N-formimidoyl-L-glutamate + H2O = formamide + L-glutamate. It functions in the pathway amino-acid degradation; L-histidine degradation into L-glutamate; L-glutamate from N-formimidoyl-L-glutamate (hydrolase route): step 1/1. In terms of biological role, catalyzes the conversion of N-formimidoyl-L-glutamate to L-glutamate and formamide. This Cupriavidus pinatubonensis (strain JMP 134 / LMG 1197) (Cupriavidus necator (strain JMP 134)) protein is Formimidoylglutamase.